The sequence spans 69 residues: uncharacterized protein (69 aa).

The interval 21–42 (MYAANKKSDARRRGKVGKEQWE) is disordered. The stretch at 35-69 (KVGKEQWEKEMEQYNIQKAQFEKELKEKKEKELKK) forms a coiled coil.

This is an uncharacterized protein from Acheta domesticus (House cricket).